Consider the following 1339-residue polypeptide: Astrotactin-2 (1339 aa).

Residues 1–49 (MAAAGARLSPGPGSGLRGRPRLCFHPGPPPLLPLLLLFLLLLPPPPLLA) form the signal peptide. The Lumenal portion of the chain corresponds to 50 to 206 (GATAAASREP…IVEEQMHILH (157 aa)). The N-linked (GlcNAc...) asparagine glycan is linked to Asn168. The helical transmembrane segment at 207 to 227 (ISVMGGLIALLLLLLVFTVAL) threads the bilayer. The Cytoplasmic portion of the chain corresponds to 228 to 434 (YAQRRWQKRR…KGLLKSPVNK (207 aa)). Disordered stretches follow at residues 296–316 (EEDE…EFGS) and 363–408 (TPIE…ADDE). The helical transmembrane segment at 435 to 455 (TALTLIAVSSCILAMVCGSQM) threads the bilayer. Topologically, residues 456–1339 (SCPLTVKVTL…RNTYGESKGR (884 aa)) are lumenal. EGF-like domains follow at residues 510–550 (VRDL…HLCV), 651–695 (PVRD…SGCY), and 699–751 (KGID…KSCL). Intrachain disulfides connect Cys514-Cys526, Cys522-Cys533, Cys535-Cys549, Cys655-Cys668, Cys662-Cys679, Cys681-Cys694, Cys703-Cys715, Cys711-Cys735, and Cys737-Cys750. Residues Asn770 and Asn783 are each glycosylated (N-linked (GlcNAc...) asparagine). 3 disulfide bridges follow: Cys825–Cys987, Cys916–Cys977, and Cys983–Cys990. The N-linked (GlcNAc...) asparagine glycan is linked to Asn1020. Cystine bridges form between Cys1036-Cys1047, Cys1049-Cys1062, Cys1136-Cys1158, Cys1190-Cys1277, and Cys1298-Cys1321. Positions 1065–1188 (LLQPVLRLSP…SELSTVTLRT (124 aa)) constitute a Fibronectin type-III domain.

It belongs to the astrotactin family. As to quaternary structure, interacts with ASTN1; the interaction is not calcium-dependent.

It is found in the membrane. It localises to the perikaryon. The protein resides in the cytoplasm. The protein localises to the cell cortex. Its subcellular location is the early endosome. It is found in the late endosome. It localises to the cytoplasmic vesicle. The protein resides in the clathrin-coated vesicle. In terms of biological role, mediates recycling of the neuronal cell adhesion molecule ASTN1 to the anterior pole of the cell membrane in migrating neurons. Promotes ASTN1 internalization and intracellular transport of endocytosed ASTN1. Selectively binds inositol-4,5-bisphosphate, inositol-3,4,5-trisphosphate and inositol-1,3,4,5-tetrakisphosphate, suggesting it is recruited to membranes that contain lipids with a phosphoinositide headgroup. The chain is Astrotactin-2 (ASTN2) from Homo sapiens (Human).